The chain runs to 299 residues: Tyrosine recombinase XerC (299 aa).

Positions 1–85 (MQNELDAYFE…SVRGLYRYLN (85 aa)) constitute a Core-binding (CB) domain. The Tyr recombinase domain occupies 106–285 (RLPRLLDTDR…DFQHLAKVYD (180 aa)). Active-site residues include Arg-146, Lys-170, His-237, Arg-240, and His-263. The active-site O-(3'-phospho-DNA)-tyrosine intermediate is the Tyr-272.

The protein belongs to the 'phage' integrase family. XerC subfamily. In terms of assembly, forms a cyclic heterotetrameric complex composed of two molecules of XerC and two molecules of XerD.

It localises to the cytoplasm. Functionally, site-specific tyrosine recombinase, which acts by catalyzing the cutting and rejoining of the recombining DNA molecules. The XerC-XerD complex is essential to convert dimers of the bacterial chromosome into monomers to permit their segregation at cell division. It also contributes to the segregational stability of plasmids. This Stutzerimonas stutzeri (strain A1501) (Pseudomonas stutzeri) protein is Tyrosine recombinase XerC.